The chain runs to 1018 residues: 2-oxoglutarate dehydrogenase-like, mitochondrial (1018 aa).

3 residues coordinate Ca(2+): histidine 138, aspartate 151, and aspartate 153. Thiamine diphosphate-binding residues include arginine 307, aspartate 406, asparagine 439, isoleucine 441, and glutamine 671. Residues aspartate 406, asparagine 439, and isoleucine 441 each coordinate Mg(2+).

This sequence belongs to the alpha-ketoglutarate dehydrogenase family. The OGDHC complex comprises multiple copies of three catalytic enzyme components, the 2-oxoglutarate dehydrogenase (OGDH/E1), the dihydrolipoamide dehydrogenase (DLST/E2) and the dihydrolipoamide dehydrogenase (DLD/E3). OGDHL/E1-like isoenzyme may replace OGDH in the OGDHC complex in the brain. Thiamine diphosphate serves as cofactor. Mg(2+) is required as a cofactor.

Its subcellular location is the mitochondrion matrix. The catalysed reaction is N(6)-[(R)-lipoyl]-L-lysyl-[protein] + 2-oxoglutarate + H(+) = N(6)-[(R)-S(8)-succinyldihydrolipoyl]-L-lysyl-[protein] + CO2. 2-oxoglutarate dehydrogenase (E1-like) component of the 2-oxoglutarate dehydrogenase multienzyme complex (OGDHC) which mediates the decarboxylation of alpha-ketoglutarate in the tricarboxylic acid cycle. The OGDHC complex catalyzes the overall conversion of 2-oxoglutarate to succinyl-CoA and CO(2) while reducing NAD(+) to NADH. The OGDHC complex is mainly active in the mitochondrion. Involved in the inhibition of cell proliferation and in apoptosis. The sequence is that of 2-oxoglutarate dehydrogenase-like, mitochondrial (ogdhl) from Xenopus laevis (African clawed frog).